A 116-amino-acid polypeptide reads, in one-letter code: Guanylin (116 aa).

Positions 1–23 (MNACVLSVLCLLGALAVLVEGVT) are cleaved as a signal peptide. Positions 24–101 (VQDGDLSFPL…LQRLEAIAQD (78 aa)) are excised as a propeptide. 3 disulfides stabilise this stretch: cysteine 69–cysteine 83, cysteine 105–cysteine 113, and cysteine 108–cysteine 116.

It belongs to the guanylin family. Localized in both crypts and villi in the small intestine and to superficial epithelial cells in the colon.

The protein resides in the secreted. In terms of biological role, endogenous activator of intestinal guanylate cyclase. It stimulates this enzyme through the same receptor binding region as the heat-stable enterotoxins. This Mus musculus (Mouse) protein is Guanylin (Guca2a).